Reading from the N-terminus, the 101-residue chain is Chaperone modulatory protein CbpM (101 aa).

It belongs to the CbpM family.

Functionally, interacts with CbpA and inhibits both the DnaJ-like co-chaperone activity and the DNA binding activity of CbpA. Together with CbpA, modulates the activity of the DnaK chaperone system. Does not inhibit the co-chaperone activity of DnaJ. This is Chaperone modulatory protein CbpM from Salmonella arizonae (strain ATCC BAA-731 / CDC346-86 / RSK2980).